A 448-amino-acid chain; its full sequence is JmjC domain-containing protein D (448 aa).

One can recognise a JmjC domain in the interval 305–448; it reads EQIPQLRNDI…SLSQSFSIFP (144 aa).

This is JmjC domain-containing protein D (jcdD) from Dictyostelium discoideum (Social amoeba).